A 345-amino-acid polypeptide reads, in one-letter code: NADPH dehydrogenase (345 aa).

23–26 (SPMC) lines the FMN pocket. Tyr28 lines the substrate pocket. Residues Ala60 and Gln102 each coordinate FMN. Substrate is bound at residue 164–167 (HGAH). Residues Arg215 and 307 to 308 (GR) each bind FMN.

Belongs to the NADH:flavin oxidoreductase/NADH oxidase family. NamA subfamily. In terms of assembly, homotetramer. Requires FMN as cofactor.

It catalyses the reaction A + NADPH + H(+) = AH2 + NADP(+). In terms of biological role, catalyzes the reduction of the double bond of an array of alpha,beta-unsaturated aldehydes and ketones. It also reduces the nitro group of nitroester and nitroaromatic compounds. It could have a role in detoxification processes. The sequence is that of NADPH dehydrogenase from Bacillus anthracis (strain CDC 684 / NRRL 3495).